The chain runs to 317 residues: Transaldolase (317 aa).

K125 (schiff-base intermediate with substrate) is an active-site residue.

Belongs to the transaldolase family. Type 1 subfamily. As to quaternary structure, homodimer.

Its subcellular location is the cytoplasm. It catalyses the reaction D-sedoheptulose 7-phosphate + D-glyceraldehyde 3-phosphate = D-erythrose 4-phosphate + beta-D-fructose 6-phosphate. It participates in carbohydrate degradation; pentose phosphate pathway; D-glyceraldehyde 3-phosphate and beta-D-fructose 6-phosphate from D-ribose 5-phosphate and D-xylulose 5-phosphate (non-oxidative stage): step 2/3. Functionally, transaldolase is important for the balance of metabolites in the pentose-phosphate pathway. The polypeptide is Transaldolase (Delftia acidovorans (strain DSM 14801 / SPH-1)).